The chain runs to 623 residues: Peptidoglycan D,D-transpeptidase MrdA (623 aa).

Residues 17-37 (VIVAFGVVVVCFGILIFNLYN) traverse the membrane as a helical segment. Ser326 functions as the Acyl-ester intermediate in the catalytic mechanism.

The protein belongs to the transpeptidase family. MrdA subfamily.

The protein localises to the cell inner membrane. It catalyses the reaction Preferential cleavage: (Ac)2-L-Lys-D-Ala-|-D-Ala. Also transpeptidation of peptidyl-alanyl moieties that are N-acyl substituents of D-alanine.. The protein operates within cell wall biogenesis; peptidoglycan biosynthesis. Functionally, catalyzes cross-linking of the peptidoglycan cell wall. This chain is Peptidoglycan D,D-transpeptidase MrdA, found in Salmonella typhimurium (strain SL1344).